Here is a 100-residue protein sequence, read N- to C-terminus: Urease subunit gamma (100 aa).

The protein belongs to the urease gamma subunit family. In terms of assembly, heterotrimer of UreA (gamma), UreB (beta) and UreC (alpha) subunits. Three heterotrimers associate to form the active enzyme.

The protein localises to the cytoplasm. It catalyses the reaction urea + 2 H2O + H(+) = hydrogencarbonate + 2 NH4(+). It participates in nitrogen metabolism; urea degradation; CO(2) and NH(3) from urea (urease route): step 1/1. In Paraburkholderia phytofirmans (strain DSM 17436 / LMG 22146 / PsJN) (Burkholderia phytofirmans), this protein is Urease subunit gamma.